A 239-amino-acid chain; its full sequence is Vesicle-associated protein 1-2 (239 aa).

Methionine 1 is subject to N-acetylmethionine. Over 1–215 (MSNELLTIDP…RRESKRSKSG (215 aa)) the chain is Cytoplasmic. At serine 2 the chain carries N-acetylserine; in Vesicle-associated protein 1-2, N-terminally processed. Residues 5-125 (LLTIDPVDLQ…EETKLRVVYV (121 aa)) enclose the MSP domain. A disordered region spans residues 123-174 (VYVAPPRPPSPVREGSEEGSSPRASVSDNGNASDFTAAPRFSADRVDAQDNS). The residue at position 132 (serine 132) is a Phosphoserine. The span at 140–156 (EGSSPRASVSDNGNASD) shows a compositional bias: polar residues. Serine 164 is subject to Phosphoserine. A coiled-coil region spans residues 169–215 (DAQDNSSEARALVTKLTEEKNSAVQLNNRLQQELDQLRRESKRSKSG). Residues 216-236 (GIPFMYVLLVGLIGLILGYIM) traverse the membrane as a helical; Anchor for type IV membrane protein segment.

The protein belongs to the VAMP-associated protein (VAP) (TC 9.B.17) family. In terms of assembly, interacts with ORP3A. Binds to VLG at the endomembrane system.

The protein localises to the endoplasmic reticulum membrane. Its function is as follows. Vesicle-associated protein that binds the oxysterol-binding protein ORP3A and allows its targeting to the ER. The chain is Vesicle-associated protein 1-2 from Arabidopsis thaliana (Mouse-ear cress).